We begin with the raw amino-acid sequence, 280 residues long: Aspartate/glutamate leucyltransferase (280 aa).

Belongs to the R-transferase family. Bpt subfamily.

The protein resides in the cytoplasm. It carries out the reaction N-terminal L-glutamyl-[protein] + L-leucyl-tRNA(Leu) = N-terminal L-leucyl-L-glutamyl-[protein] + tRNA(Leu) + H(+). It catalyses the reaction N-terminal L-aspartyl-[protein] + L-leucyl-tRNA(Leu) = N-terminal L-leucyl-L-aspartyl-[protein] + tRNA(Leu) + H(+). Its function is as follows. Functions in the N-end rule pathway of protein degradation where it conjugates Leu from its aminoacyl-tRNA to the N-termini of proteins containing an N-terminal aspartate or glutamate. The sequence is that of Aspartate/glutamate leucyltransferase from Cereibacter sphaeroides (strain KD131 / KCTC 12085) (Rhodobacter sphaeroides).